We begin with the raw amino-acid sequence, 865 residues long: DNA topoisomerase 3-beta (865 aa).

The 146-residue stretch at 6–151 (RVLMVAEKPS…KVYRARFSSV (146 aa)) folds into the Toprim domain. 3 residues coordinate Mg(2+): E12, D116, and D118. A Topo IA-type catalytic domain is found at 167–587 (NRDEALAVDA…HVIQQFRRKF (421 aa)). The interval 209–214 (SYGPCQ) is interaction with DNA. Catalysis depends on Y331, which acts as the O-(5'-phospho-DNA)-tyrosine intermediate. Residues 833 to 853 (RRGGRGRGRGRGRGRGGRRGS) are compositionally biased toward basic residues. The tract at residues 833 to 865 (RRGGRGRGRGRGRGRGGRRGSKSVDPKMSFRDF) is disordered. Residues 854 to 865 (KSVDPKMSFRDF) are compositionally biased toward basic and acidic residues.

Belongs to the type IA topoisomerase family. Requires Mg(2+) as cofactor.

It carries out the reaction ATP-independent breakage of single-stranded DNA, followed by passage and rejoining.. Releases the supercoiling and torsional tension of DNA introduced during the DNA replication and transcription by transiently cleaving and rejoining one strand of the DNA duplex. Introduces a single-strand break via transesterification at a target site in duplex DNA. The scissile phosphodiester is attacked by the catalytic tyrosine of the enzyme, resulting in the formation of a DNA-(5'-phosphotyrosyl)-enzyme intermediate and the expulsion of a 3'-OH DNA strand. The free DNA strand than undergoes passage around the unbroken strand thus removing DNA supercoils. Finally, in the religation step, the DNA 3'-OH attacks the covalent intermediate to expel the active-site tyrosine and restore the DNA phosphodiester backbone. In Arabidopsis thaliana (Mouse-ear cress), this protein is DNA topoisomerase 3-beta.